The primary structure comprises 509 residues: Probable DNA ligase (509 aa).

D218 serves as a coordination point for ATP. K220 serves as the catalytic N6-AMP-lysine intermediate. Residues R225, R240, E269, F302, R374, and K380 each contribute to the ATP site.

It belongs to the ATP-dependent DNA ligase family. Requires Mg(2+) as cofactor.

The enzyme catalyses ATP + (deoxyribonucleotide)n-3'-hydroxyl + 5'-phospho-(deoxyribonucleotide)m = (deoxyribonucleotide)n+m + AMP + diphosphate.. Functionally, DNA ligase that seals nicks in double-stranded DNA during DNA replication, DNA recombination and DNA repair. The sequence is that of Probable DNA ligase from Nocardioides sp. (strain ATCC BAA-499 / JS614).